We begin with the raw amino-acid sequence, 382 residues long: SAT4 family membrane protein (382 aa).

The interval 1–22 (MFGAELVGRETGGQSTDQPYSY) is disordered. A glycan (N-linked (GlcNAc...) asparagine) is linked at Asn-78. 2 consecutive transmembrane segments (helical) span residues 80–100 (SQIL…LLYL) and 112–132 (YLSI…NFFL). Asn-147 carries N-linked (GlcNAc...) asparagine glycosylation. The next 3 helical transmembrane spans lie at 159–179 (ILVT…LPII), 192–212 (LGIS…IMRL), and 228–248 (WYTE…PTFF). A glycan (N-linked (GlcNAc...) asparagine) is linked at Asn-269.

It belongs to the SAT4 family.

It localises to the membrane. In Emericella nidulans (strain FGSC A4 / ATCC 38163 / CBS 112.46 / NRRL 194 / M139) (Aspergillus nidulans), this protein is SAT4 family membrane protein.